The chain runs to 123 residues: Protein LLP homolog (123 aa).

Residues 1-21 are compositionally biased toward basic residues; it reads MAKSIRSKWKRKMRAEKRKKN. Disordered regions lie at residues 1-23 and 55-123; these read MAKS…KNAP and KINE…KLAW. Residues 70 to 89 are compositionally biased toward basic and acidic residues; sequence DSSKMDMELKRNKKNLRDQH. The span at 100–123 shows a compositional bias: basic residues; it reads QQKKLKSQCGKKKGKSKQAKKLAW.

The protein belongs to the learning-associated protein family.

It localises to the nucleus. The protein localises to the nucleolus. The protein resides in the chromosome. In terms of biological role, regulates dendritic and spine growth and synaptic transmission. The sequence is that of Protein LLP homolog (llph) from Xenopus tropicalis (Western clawed frog).